The primary structure comprises 233 residues: MRFFRFLVFPVIAGLSSVLAAPITSNDTVDGSGEAPETLLQNSEEQPHQRLKFYNWDYKDLGTTAFEDISFPARQPPVAVNQSEQCPDGWLRFADSCYWIETELMGFAKAERKCFEKQSTLFVANSLEEWDSIRSHSKEAYFSWIGLVRFTHYEKSEQLPRWQTEGAINPTKMNWLIKPYKPIVNGWTSFANCAASYKSPATLESASYTFFYPCTYLLYSICERNSTIVNVMQ.

Positions Met-1–Ala-20 are cleaved as a signal peptide. Asn-26 carries an N-linked (GlcNAc...) asparagine glycan. An O-linked (Xyl...) (chondroitin sulfate) serine glycan is attached at Ser-32. The N-linked (GlcNAc...) asparagine glycan is linked to Asn-81. The region spanning Phe-93 to Glu-223 is the C-type lectin domain. 2 cysteine pairs are disulfide-bonded: Cys-114-Cys-222 and Cys-193-Cys-214. Residue Asn-225 is glycosylated (N-linked (GlcNAc...) asparagine).

This is C-type lectin domain-containing protein 87 from Caenorhabditis briggsae.